Consider the following 251-residue polypeptide: Hydroxyacylglutathione hydrolase (251 aa).

Residues His53, His55, Asp57, His58, His110, Asp127, and His165 each coordinate Zn(2+).

It belongs to the metallo-beta-lactamase superfamily. Glyoxalase II family. In terms of assembly, monomer. It depends on Zn(2+) as a cofactor.

It catalyses the reaction an S-(2-hydroxyacyl)glutathione + H2O = a 2-hydroxy carboxylate + glutathione + H(+). It functions in the pathway secondary metabolite metabolism; methylglyoxal degradation; (R)-lactate from methylglyoxal: step 2/2. Functionally, thiolesterase that catalyzes the hydrolysis of S-D-lactoyl-glutathione to form glutathione and D-lactic acid. The polypeptide is Hydroxyacylglutathione hydrolase (Klebsiella pneumoniae subsp. pneumoniae (strain ATCC 700721 / MGH 78578)).